The primary structure comprises 336 residues: 4-hydroxy-3-methylbut-2-enyl diphosphate reductase (336 aa).

Cys-21 is a binding site for [4Fe-4S] cluster. (2E)-4-hydroxy-3-methylbut-2-enyl diphosphate is bound by residues His-50 and His-86. The dimethylallyl diphosphate site is built by His-50 and His-86. His-50 and His-86 together coordinate isopentenyl diphosphate. A [4Fe-4S] cluster-binding site is contributed by Cys-108. His-136 serves as a coordination point for (2E)-4-hydroxy-3-methylbut-2-enyl diphosphate. A dimethylallyl diphosphate-binding site is contributed by His-136. His-136 is a binding site for isopentenyl diphosphate. Catalysis depends on Glu-138, which acts as the Proton donor. (2E)-4-hydroxy-3-methylbut-2-enyl diphosphate is bound at residue Thr-177. Cys-207 is a [4Fe-4S] cluster binding site. Ser-235, Ser-236, Asn-237, and Ser-280 together coordinate (2E)-4-hydroxy-3-methylbut-2-enyl diphosphate. The dimethylallyl diphosphate site is built by Ser-235, Ser-236, Asn-237, and Ser-280. 4 residues coordinate isopentenyl diphosphate: Ser-235, Ser-236, Asn-237, and Ser-280.

The protein belongs to the IspH family. The cofactor is [4Fe-4S] cluster.

The enzyme catalyses isopentenyl diphosphate + 2 oxidized [2Fe-2S]-[ferredoxin] + H2O = (2E)-4-hydroxy-3-methylbut-2-enyl diphosphate + 2 reduced [2Fe-2S]-[ferredoxin] + 2 H(+). The catalysed reaction is dimethylallyl diphosphate + 2 oxidized [2Fe-2S]-[ferredoxin] + H2O = (2E)-4-hydroxy-3-methylbut-2-enyl diphosphate + 2 reduced [2Fe-2S]-[ferredoxin] + 2 H(+). It participates in isoprenoid biosynthesis; dimethylallyl diphosphate biosynthesis; dimethylallyl diphosphate from (2E)-4-hydroxy-3-methylbutenyl diphosphate: step 1/1. The protein operates within isoprenoid biosynthesis; isopentenyl diphosphate biosynthesis via DXP pathway; isopentenyl diphosphate from 1-deoxy-D-xylulose 5-phosphate: step 6/6. Functionally, catalyzes the conversion of 1-hydroxy-2-methyl-2-(E)-butenyl 4-diphosphate (HMBPP) into a mixture of isopentenyl diphosphate (IPP) and dimethylallyl diphosphate (DMAPP). Acts in the terminal step of the DOXP/MEP pathway for isoprenoid precursor biosynthesis. In Mesorhizobium japonicum (strain LMG 29417 / CECT 9101 / MAFF 303099) (Mesorhizobium loti (strain MAFF 303099)), this protein is 4-hydroxy-3-methylbut-2-enyl diphosphate reductase.